The following is a 280-amino-acid chain: MPRRHRFAAAIAAVAVAAVLLVTLTVAVVTHGDGAFAPAGTPAGAGASAGIGSDTGSNASEDSDMFPTIVFGDTVIERKEYVAALKAQHGAARLYFRQTYGVDPAEDGWDKAHDGEVPCRWLASRAIDELRRRHAAYLIGVDLGQVADDSYASIVARMEAVNSGNAELKSDGGIVYGRTGFDIDSYLSYELSALKNAYTGDESNPGMSLSDDEVRRYYDEHDWTKDGVDGKTPLDEVRGNVKAQMRSERYDELVSQRAEAIDVTDLPWDALYRFTAGRLG.

A signal peptide spans 1-37 (MPRRHRFAAAIAAVAVAAVLLVTLTVAVVTHGDGAFA).

In terms of assembly, homodimer.

It is found in the secreted. In terms of biological role, chaperone required for active expression of the lacto-N-biosidase LnbX. The sequence is that of Chaperone for lacto-N-biosidase from Bifidobacterium longum subsp. longum (strain ATCC 15707 / DSM 20219 / JCM 1217 / NCTC 11818 / E194b).